We begin with the raw amino-acid sequence, 187 residues long: Elongation factor P (187 aa).

Lysine 33 carries the N6-(3,6-diaminohexanoyl)-5-hydroxylysine modification.

It belongs to the elongation factor P family. May be beta-lysylated on the epsilon-amino group of Lys-33 by the combined action of EpmA and EpmB, and then hydroxylated on the C5 position of the same residue by EpmC (if this protein is present). Lysylation is critical for the stimulatory effect of EF-P on peptide-bond formation. The lysylation moiety may extend toward the peptidyltransferase center and stabilize the terminal 3-CCA end of the tRNA. Hydroxylation of the C5 position on Lys-33 may allow additional potential stabilizing hydrogen-bond interactions with the P-tRNA.

The protein resides in the cytoplasm. It functions in the pathway protein biosynthesis; polypeptide chain elongation. Its function is as follows. Involved in peptide bond synthesis. Alleviates ribosome stalling that occurs when 3 or more consecutive Pro residues or the sequence PPG is present in a protein, possibly by augmenting the peptidyl transferase activity of the ribosome. Modification of Lys-33 is required for alleviation. The chain is Elongation factor P from Blochmanniella floridana.